Consider the following 270-residue polypeptide: Feruloyl esterase C (270 aa).

An N-terminal signal peptide occupies residues 1–21; that stretch reads MLRAVLLPTLLAFGAFTPVHG.

This sequence belongs to the faeC family.

Its subcellular location is the secreted. It catalyses the reaction feruloyl-polysaccharide + H2O = ferulate + polysaccharide.. Its function is as follows. Involved in degradation of plant cell walls. Hydrolyzes the feruloyl-arabinose ester bond in arabinoxylans, and the feruloyl-galactose ester bond in pectin. Active against paranitrophenyl-acetate, methyl ferulate and wheat arabinoxylan. This chain is Feruloyl esterase C (faeC), found in Emericella nidulans (strain FGSC A4 / ATCC 38163 / CBS 112.46 / NRRL 194 / M139) (Aspergillus nidulans).